The primary structure comprises 932 residues: Valine--tRNA ligase (932 aa).

Positions 75 to 85 match the 'HIGH' region motif; the sequence is PNVTGQLHMGH. The 'KMSKS' region motif lies at 568–572; sequence KMSKS. K571 is an ATP binding site. Residues 863 to 929 are a coiled coil; the sequence is TVDVAAERKR…ERITARLEGL (67 aa).

Belongs to the class-I aminoacyl-tRNA synthetase family. ValS type 1 subfamily. In terms of assembly, monomer.

It is found in the cytoplasm. It carries out the reaction tRNA(Val) + L-valine + ATP = L-valyl-tRNA(Val) + AMP + diphosphate. Catalyzes the attachment of valine to tRNA(Val). As ValRS can inadvertently accommodate and process structurally similar amino acids such as threonine, to avoid such errors, it has a 'posttransfer' editing activity that hydrolyzes mischarged Thr-tRNA(Val) in a tRNA-dependent manner. This is Valine--tRNA ligase from Corynebacterium jeikeium (strain K411).